A 342-amino-acid chain; its full sequence is ATP-dependent (S)-NAD(P)H-hydrate dehydratase (342 aa).

The YjeF C-terminal domain occupies 11–337 (ILPALEKVVP…EYLGHRLFTF (327 aa)). (6S)-NADPHX contacts are provided by residues Gly-127 and 180–186 (NVMEHKR). Residues 229–233 (KGKTD) and 248–257 (GSPRRCGGQG) each bind ATP. Position 258 (Asp-258) interacts with (6S)-NADPHX.

This sequence belongs to the NnrD/CARKD family. Requires Mg(2+) as cofactor.

The catalysed reaction is (6S)-NADHX + ATP = ADP + phosphate + NADH + H(+). It catalyses the reaction (6S)-NADPHX + ATP = ADP + phosphate + NADPH + H(+). Functionally, catalyzes the dehydration of the S-form of NAD(P)HX at the expense of ATP, which is converted to ADP. Together with NAD(P)HX epimerase, which catalyzes the epimerization of the S- and R-forms, the enzyme allows the repair of both epimers of NAD(P)HX, a damaged form of NAD(P)H that is a result of enzymatic or heat-dependent hydration. The chain is ATP-dependent (S)-NAD(P)H-hydrate dehydratase from Physcomitrium patens (Spreading-leaved earth moss).